A 143-amino-acid polypeptide reads, in one-letter code: S-adenosylmethionine decarboxylase proenzyme (143 aa).

S66 acts as the Schiff-base intermediate with substrate; via pyruvic acid in catalysis. Position 66 is a pyruvic acid (Ser); by autocatalysis (S66). H71 acts as the Proton acceptor; for processing activity in catalysis. Catalysis depends on C86, which acts as the Proton donor; for catalytic activity.

Belongs to the prokaryotic AdoMetDC family. Type 1 subfamily. In terms of assembly, heterotetramer of two alpha and two beta chains arranged as a dimer of alpha/beta heterodimers. The cofactor is pyruvate. Post-translationally, is synthesized initially as an inactive proenzyme. Formation of the active enzyme involves a self-maturation process in which the active site pyruvoyl group is generated from an internal serine residue via an autocatalytic post-translational modification. Two non-identical subunits are generated from the proenzyme in this reaction, and the pyruvate is formed at the N-terminus of the alpha chain, which is derived from the carboxyl end of the proenzyme. The post-translation cleavage follows an unusual pathway, termed non-hydrolytic serinolysis, in which the side chain hydroxyl group of the serine supplies its oxygen atom to form the C-terminus of the beta chain, while the remainder of the serine residue undergoes an oxidative deamination to produce ammonia and the pyruvoyl group blocking the N-terminus of the alpha chain.

The enzyme catalyses S-adenosyl-L-methionine + H(+) = S-adenosyl 3-(methylsulfanyl)propylamine + CO2. It functions in the pathway amine and polyamine biosynthesis; S-adenosylmethioninamine biosynthesis; S-adenosylmethioninamine from S-adenosyl-L-methionine: step 1/1. In terms of biological role, catalyzes the decarboxylation of S-adenosylmethionine to S-adenosylmethioninamine (dcAdoMet), the propylamine donor required for the synthesis of the polyamines spermine and spermidine from the diamine putrescine. This is S-adenosylmethionine decarboxylase proenzyme from Thermococcus gammatolerans (strain DSM 15229 / JCM 11827 / EJ3).